A 793-amino-acid polypeptide reads, in one-letter code: E3 ubiquitin-protein ligase UHRF1 (793 aa).

The 78-residue stretch at Met-1–Val-78 folds into the Ubiquitin-like domain. Phosphoserine is present on residues Ser-76, Ser-91, Ser-95, and Ser-165. Residues Ser-82–Glu-124 form a disordered region. Tudor-like stretches follow at residues Gly-133–Arg-209 and Asp-216–Pro-283. A Glycyl lysine isopeptide (Lys-Gly) (interchain with G-Cter in SUMO2) cross-link involves residue Lys-279. Ser-287 carries the post-translational modification Phosphoserine. A linker region spans residues Arg-296–Ser-301. Phosphoserine; by PKA is present on Ser-298. A PHD-type zinc finger spans residues Asn-310–Asp-366. Histone H3R2me0 binding stretches follow at residues Cys-333–Asp-337 and Pro-353–Glu-355. At Ser-368 the chain carries Phosphoserine. Residue Lys-385 forms a Glycyl lysine isopeptide (Lys-Gly) (interchain with G-Cter in SUMO2) linkage. Position 399 is an N6-acetyllysine (Lys-399). Residues Gly-419 to Arg-582 form the YDG domain. Residues His-445–Val-446 form a required to promote base flipping region. DNA is bound by residues Ala-463–Gly-464 and Asp-469. 2 required for formation of a 5-methylcytosine-binding pocket regions span residues Tyr-466–Asp-469 and Tyr-478–Ser-481. N6-acetyllysine; alternate is present on Lys-546. Lys-546 is covalently cross-linked (Glycyl lysine isopeptide (Lys-Gly) (interchain with G-Cter in SUMO2); alternate). The span at Arg-618–Glu-629 shows a compositional bias: basic and acidic residues. Positions Arg-618–Pro-673 are disordered. Ser-639 is modified (phosphoserine; by CDK1). Ser-651 bears the Phosphoserine mark. A Glycyl lysine isopeptide (Lys-Gly) (interchain with G-Cter in SUMO2) cross-link involves residue Lys-670. Residues Ser-707 and Ser-709 each carry the phosphoserine modification. Residues Cys-724–Arg-763 form an RING-type zinc finger.

In terms of assembly, interacts with DNMT3A and DNMT3B. Interacts with DNMT1; the interaction is direct. Interacts with USP7; leading to its deubiquitination. Interacts with histone H3. Interacts with HDAC1, but not with HDAC2. Interacts with BLTP3A. Interacts with PML. Interacts with EHMT2. Binds hemimethylated CpG containing oligonucleotides. Interacts with ZNF263; recruited to the SIX3 promoter along with other proteins involved in chromatin modification and transcriptional corepression where it contributes to transcriptional repression. Interacts with UHRF2. Interacts with FANCD2. Interacts with TET1 isoform 2; this interaction induces the recruitment of TET1 isoform 2 to replicating heterochromatin. In terms of processing, phosphorylation at Ser-298 of the linker region decreases the binding to H3K9me3. Phosphorylation at Ser-639 by CDK1 during M phase impairs interaction with USP7, preventing deubiquitination and leading to degradation by the proteasome. Post-translationally, ubiquitinated; which leads to proteasomal degradation. Autoubiquitinated; interaction with USP7 leads to deubiquitination and prevents degradation. Ubiquitination and degradation takes place during M phase, when phosphorylation at Ser-639 prevents interaction with USP7 and subsequent deubiquitination. Polyubiquitination may be stimulated by DNA damage. As to expression, expressed in thymus, bone marrow, testis, lung and heart. Overexpressed in breast cancer.

The protein resides in the nucleus. The catalysed reaction is S-ubiquitinyl-[E2 ubiquitin-conjugating enzyme]-L-cysteine + [acceptor protein]-L-lysine = [E2 ubiquitin-conjugating enzyme]-L-cysteine + N(6)-ubiquitinyl-[acceptor protein]-L-lysine.. It participates in protein modification; protein ubiquitination. Multidomain protein that acts as a key epigenetic regulator by bridging DNA methylation and chromatin modification. Specifically recognizes and binds hemimethylated DNA at replication forks via its YDG domain and recruits DNMT1 methyltransferase to ensure faithful propagation of the DNA methylation patterns through DNA replication. In addition to its role in maintenance of DNA methylation, also plays a key role in chromatin modification: through its tudor-like regions and PHD-type zinc fingers, specifically recognizes and binds histone H3 trimethylated at 'Lys-9' (H3K9me3) and unmethylated at 'Arg-2' (H3R2me0), respectively, and recruits chromatin proteins. Enriched in pericentric heterochromatin where it recruits different chromatin modifiers required for this chromatin replication. Also localizes to euchromatic regions where it negatively regulates transcription possibly by impacting DNA methylation and histone modifications. Has E3 ubiquitin-protein ligase activity by mediating the ubiquitination of target proteins such as histone H3 and PML. It is still unclear how E3 ubiquitin-protein ligase activity is related to its role in chromatin in vivo. Plays a role in DNA repair by cooperating with UHRF2 to ensure recruitment of FANCD2 to interstrand cross-links (ICLs) leading to FANCD2 activation. Acts as a critical player of proper spindle architecture by catalyzing the 'Lys-63'-linked ubiquitination of KIF11, thereby controlling KIF11 localization on the spindle. The chain is E3 ubiquitin-protein ligase UHRF1 (UHRF1) from Homo sapiens (Human).